A 194-amino-acid chain; its full sequence is Inosine triphosphate pyrophosphatase (194 aa).

Alanine 2 bears the N-acetylalanine mark. 14 to 19 (TGNAKK) is a binding site for ITP. Residue glutamate 44 participates in Mg(2+) binding. ITP is bound by residues lysine 56, 72–73 (DT), lysine 89, 149–152 (FGWD), lysine 172, and 177–178 (HR).

This sequence belongs to the HAM1 NTPase family. In terms of assembly, homodimer. The cofactor is Mg(2+). As to expression, ubiquitous. Highly expressed in heart, liver, sex glands, thyroid and adrenal gland.

The protein resides in the cytoplasm. The enzyme catalyses ITP + H2O = IMP + diphosphate + H(+). It catalyses the reaction dITP + H2O = dIMP + diphosphate + H(+). The catalysed reaction is XTP + H2O = XMP + diphosphate + H(+). It carries out the reaction N(6)-hydroxy-dATP + H2O = N(6)-hydroxy-dAMP + diphosphate + H(+). Its function is as follows. Pyrophosphatase that hydrolyzes the non-canonical purine nucleotides inosine triphosphate (ITP), deoxyinosine triphosphate (dITP) as well as 2'-deoxy-N-6-hydroxylaminopurine triphosphate (dHAPTP) and xanthosine 5'-triphosphate (XTP) to their respective monophosphate derivatives. The enzyme does not distinguish between the deoxy- and ribose forms. Probably excludes non-canonical purines from RNA and DNA precursor pools, thus preventing their incorporation into RNA and DNA and avoiding chromosomal lesions. The protein is Inosine triphosphate pyrophosphatase of Homo sapiens (Human).